The following is a 343-amino-acid chain: DNA-directed RNA polymerase subunit alpha (343 aa).

Residues 1–239 (MGETVTIQKN…DQLNVFVNFE (239 aa)) are alpha N-terminal domain (alpha-NTD). The tract at residues 255–343 (FNPAFLKKVD…ELAKRFEDHY (89 aa)) is alpha C-terminal domain (alpha-CTD).

Belongs to the RNA polymerase alpha chain family. In terms of assembly, homodimer. The RNAP catalytic core consists of 2 alpha, 1 beta, 1 beta' and 1 omega subunit. When a sigma factor is associated with the core the holoenzyme is formed, which can initiate transcription.

It carries out the reaction RNA(n) + a ribonucleoside 5'-triphosphate = RNA(n+1) + diphosphate. Functionally, DNA-dependent RNA polymerase catalyzes the transcription of DNA into RNA using the four ribonucleoside triphosphates as substrates. This Bradyrhizobium sp. (strain BTAi1 / ATCC BAA-1182) protein is DNA-directed RNA polymerase subunit alpha.